The following is a 504-amino-acid chain: MLNSAACIVLAITAVLGRMIYTHFYSNTCAAMKRALAHIPELHFEEDDTPERYRTETRSLVRKGYERYLQYGIPFQMRNPVSELGNQVVLPVKYLEEVKRAPRSLYSFEAFSEKVFLLKYIDAPRQTDALLYAVKLDINKNMDHILNGLWDETQVLLKETVPVTGQITIPGGELACNIIARTMSYVLVGPSLCRNPEWTKIAIEATFALVAGTQGLRDRYSPGWRWLARFQRSSEKLGEVREKAMELIKPLHEERMKALKDDSGQFRNFYDTIFWTMNKRKVDRSLRAIVDQQLFLTLASIHTTAGTLQSILCDWLAHPEYHDEILAEINERLAAFKGAGGKWTQQEVNEMKKLDSFMKESTRVNPVGCMTVQRYAQRTHTFSDGFVLPAGTIFQFPSDAVHHDPKLFPDPEKFDGHRFLRLREKDANAYHYGYVSDTTLNWGAGTHACPGRFLATYVLKFAFIALITQYDLSFPEGTGKPGYFYFDNSVRIDPTAKLDIKKSS.

Positions 1-17 (MLNSAACIVLAITAVLG) are cleaved as a signal peptide. Residue C449 coordinates heme.

This sequence belongs to the cytochrome P450 family. It depends on heme as a cofactor.

Its pathway is mycotoxin biosynthesis. In terms of biological role, cytochrome P450 monooxygenase; part of the gene cluster that mediates the biosynthesis of the mycotoxin pyrichalasin H, a tyrosine-derived cytochalasan that inhibits the growth of rice seedlings, but also inhibits lymphocyte capping and actin polymerization and alters cell morphology. Pyrichalasin H is indicated as the responsible agent for the genus-specific pathogenicity of M.grisea toward crabgrass. The first step in the pathway is catalyzed by the O-methyltransferase pyiA which methylates free tyrosine to generate the precursor O-methyltyrosine. The hybrid PKS-NRPS pyiS, assisted by the enoyl reductase pyiC, are responsible for fusion of the O-methyltyrosine precursor and the polyketide backbone. The polyketide synthase module (PKS) of pyiS is responsible for the synthesis of the polyketide backbone and the downstream nonribosomal peptide synthetase (NRPS) amidates the carboxyl end of the polyketide with the O-methyltyrosine precursor. As the NRPS A-domain demonstrates substrate tolerance, pyiS can also use phenylalanine, tyrosine and even para-chlorophenylalanine as amino acid precursor, which leads to the production of novel cytochalasans, including halogenated cytochalasans. Because pyiS lacks a designated enoylreductase (ER) domain, the required activity is provided the enoyl reductase pyiC. Reduction by the hydrolyase pyiE leads to 1,5-dihydropyrrolone, which is substrate for dehydration and intra-molecular Diels-Alder cyclization by the Diels-Alderase pyiF to yield the required isoindolone-fused macrocycle. The tailoring cytochrome P450 monooxygenases piyD and piyG catalyze the hydroxylation at C-18 and C-7, respectivily, whereas the short-chain dehydrogenase/reductase pyiH reduces the carbonyl at C-21 in preparation for the transfer of an acetyl group by the acetyltransferase pyiB. These 3 reactions whose order is not clear yet, lead to the production of O-methylpyrichalasin J, a deacetylated pyrichalasin H. Finally, pyiB to converts O-methylpyrichalasin J into the final product pyrichalasin H via acetylation of C-21. The polypeptide is Pyrichalasin C-7 hydroxylase (Pyricularia grisea (Crabgrass-specific blast fungus)).